The following is a 207-amino-acid chain: Thiamine-phosphate synthase (207 aa).

4-amino-2-methyl-5-(diphosphooxymethyl)pyrimidine-binding positions include 36 to 40 and asparagine 68; that span reads QLRMK. The Mg(2+) site is built by aspartate 69 and aspartate 88. Serine 106 lines the 4-amino-2-methyl-5-(diphosphooxymethyl)pyrimidine pocket. 132-134 provides a ligand contact to 2-[(2R,5Z)-2-carboxy-4-methylthiazol-5(2H)-ylidene]ethyl phosphate; sequence TNT. 4-amino-2-methyl-5-(diphosphooxymethyl)pyrimidine is bound at residue lysine 135. Residues glycine 162 and 182-183 contribute to the 2-[(2R,5Z)-2-carboxy-4-methylthiazol-5(2H)-ylidene]ethyl phosphate site; that span reads VS.

This sequence belongs to the thiamine-phosphate synthase family. It depends on Mg(2+) as a cofactor.

The catalysed reaction is 2-[(2R,5Z)-2-carboxy-4-methylthiazol-5(2H)-ylidene]ethyl phosphate + 4-amino-2-methyl-5-(diphosphooxymethyl)pyrimidine + 2 H(+) = thiamine phosphate + CO2 + diphosphate. The enzyme catalyses 2-(2-carboxy-4-methylthiazol-5-yl)ethyl phosphate + 4-amino-2-methyl-5-(diphosphooxymethyl)pyrimidine + 2 H(+) = thiamine phosphate + CO2 + diphosphate. It catalyses the reaction 4-methyl-5-(2-phosphooxyethyl)-thiazole + 4-amino-2-methyl-5-(diphosphooxymethyl)pyrimidine + H(+) = thiamine phosphate + diphosphate. It participates in cofactor biosynthesis; thiamine diphosphate biosynthesis; thiamine phosphate from 4-amino-2-methyl-5-diphosphomethylpyrimidine and 4-methyl-5-(2-phosphoethyl)-thiazole: step 1/1. In terms of biological role, condenses 4-methyl-5-(beta-hydroxyethyl)thiazole monophosphate (THZ-P) and 2-methyl-4-amino-5-hydroxymethyl pyrimidine pyrophosphate (HMP-PP) to form thiamine monophosphate (TMP). The sequence is that of Thiamine-phosphate synthase from Methanococcus maripaludis (strain DSM 14266 / JCM 13030 / NBRC 101832 / S2 / LL).